We begin with the raw amino-acid sequence, 2290 residues long: Protein Ycf2 (2290 aa).

1644-1651 (GSIGTGRS) serves as a coordination point for ATP.

It belongs to the Ycf2 family.

The protein resides in the plastid. It localises to the chloroplast stroma. Functionally, probable ATPase of unknown function. Its presence in a non-photosynthetic plant (Epifagus virginiana) and experiments in tobacco indicate that it has an essential function which is probably not related to photosynthesis. This is Protein Ycf2 from Barbarea verna (Land cress).